The sequence spans 84 residues: uncharacterized protein (84 aa).

3 consecutive transmembrane segments (helical) span residues 4–20, 27–49, and 59–81; these read AYVL…IKYG, VWKA…WIAF, and IGLA…VYVL.

It localises to the cell membrane. This is an uncharacterized protein from Archaeoglobus fulgidus (strain ATCC 49558 / DSM 4304 / JCM 9628 / NBRC 100126 / VC-16).